The sequence spans 245 residues: 4-hydroxy-tetrahydrodipicolinate reductase (245 aa).

Residues 7–12 (GARGKV), 75–77 (GTT), and 102–105 (APNF) each bind NAD(+). H132 serves as the catalytic Proton donor/acceptor. H133 contacts (S)-2,3,4,5-tetrahydrodipicolinate. K136 acts as the Proton donor in catalysis. 142–143 (GT) contacts (S)-2,3,4,5-tetrahydrodipicolinate.

Belongs to the DapB family.

The protein resides in the cytoplasm. The catalysed reaction is (S)-2,3,4,5-tetrahydrodipicolinate + NAD(+) + H2O = (2S,4S)-4-hydroxy-2,3,4,5-tetrahydrodipicolinate + NADH + H(+). It catalyses the reaction (S)-2,3,4,5-tetrahydrodipicolinate + NADP(+) + H2O = (2S,4S)-4-hydroxy-2,3,4,5-tetrahydrodipicolinate + NADPH + H(+). It participates in amino-acid biosynthesis; L-lysine biosynthesis via DAP pathway; (S)-tetrahydrodipicolinate from L-aspartate: step 4/4. In terms of biological role, catalyzes the conversion of 4-hydroxy-tetrahydrodipicolinate (HTPA) to tetrahydrodipicolinate. This Mycolicibacterium smegmatis (strain ATCC 700084 / mc(2)155) (Mycobacterium smegmatis) protein is 4-hydroxy-tetrahydrodipicolinate reductase.